The primary structure comprises 282 residues: Cell cycle checkpoint protein RAD1 (282 aa).

The protein belongs to the rad1 family. As to quaternary structure, component of the toroidal 9-1-1 (RAD9-RAD1-HUS1) complex, composed of RAD9A, RAD1 and HUS1. The 9-1-1 complex associates with LIG1, POLB, FEN1, RAD17, HDAC1, RPA1 and RPA2. The 9-1-1 complex associates with the RAD17-RFC complex. RAD1 interacts with POLB, FEN1, HUS1, HUS1B, RAD9A and RAD9B. Interacts with DNAJC7. Interacts with RHNO1; interaction is direct. Expressed in testis, uterus, bladder, spleen, ovaries, lung, brain and muscle (at protein level).

Its subcellular location is the nucleus. Its function is as follows. Component of the 9-1-1 cell-cycle checkpoint response complex that plays a major role in DNA repair. The 9-1-1 complex is recruited to DNA lesion upon damage by the RAD17-replication factor C (RFC) clamp loader complex. Acts then as a sliding clamp platform on DNA for several proteins involved in long-patch base excision repair (LP-BER). The 9-1-1 complex stimulates DNA polymerase beta (POLB) activity by increasing its affinity for the 3'-OH end of the primer-template and stabilizes POLB to those sites where LP-BER proceeds; endonuclease FEN1 cleavage activity on substrates with double, nick, or gap flaps of distinct sequences and lengths; and DNA ligase I (LIG1) on long-patch base excision repair substrates. The 9-1-1 complex is necessary for the recruitment of RHNO1 to sites of double-stranded breaks (DSB) occurring during the S phase. The polypeptide is Cell cycle checkpoint protein RAD1 (RAD1) (Homo sapiens (Human)).